Consider the following 348-residue polypeptide: E3 ubiquitin-protein ligase MARCHF9 (348 aa).

A disordered region spans residues 48-96; it reads ARDGDGDEEEYYGSEPRARGLAGDKEPRAGPPPPPAPPPPPPGALDALS. Positions 63-75 are enriched in basic and acidic residues; sequence PRARGLAGDKEPR. The span at 76 to 90 shows a compositional bias: pro residues; the sequence is AGPPPPPAPPPPPPG. The RING-CH-type zinc-finger motif lies at 102–162; the sequence is DSGLRTPQCR…ELCYFKYQVL (61 aa). Positions 110, 113, 126, 128, 136, 139, 152, and 155 each coordinate Zn(2+). 2 helical membrane-spanning segments follow: residues 185-205 and 219-239; these read IAAI…LIWS and LFQI…GLIV. 2 disordered regions span residues 272-304 and 328-348; these read GDTG…AAQR and PPDA…VTTV.

Homodimer.

It is found in the golgi apparatus membrane. Its subcellular location is the lysosome membrane. The catalysed reaction is S-ubiquitinyl-[E2 ubiquitin-conjugating enzyme]-L-cysteine + [acceptor protein]-L-lysine = [E2 ubiquitin-conjugating enzyme]-L-cysteine + N(6)-ubiquitinyl-[acceptor protein]-L-lysine.. The protein operates within protein modification; protein ubiquitination. Its function is as follows. E3 ubiquitin-protein ligase that may mediate ubiquitination of MHC-I, CD4 and ICAM1, and promote their subsequent endocytosis and sorting to lysosomes via multivesicular bodies. E3 ubiquitin ligases accept ubiquitin from an E2 ubiquitin-conjugating enzyme in the form of a thioester and then directly transfer the ubiquitin to targeted substrates. The chain is E3 ubiquitin-protein ligase MARCHF9 (Marchf9) from Mus musculus (Mouse).